We begin with the raw amino-acid sequence, 286 residues long: Large ribosomal subunit protein uL3 (286 aa).

Residue Q152 is modified to N5-methylglutamine. The segment covering 246–265 (EAAAAAAAAEEQAAMEAAEA) has biased composition (low complexity). The segment at 246–286 (EAAAAAAAAEEQAAMEAAEAAEAKTDTVAEAEAAEKKEGDA) is disordered. Residues 266-286 (AEAKTDTVAEAEAAEKKEGDA) are compositionally biased toward basic and acidic residues.

Belongs to the universal ribosomal protein uL3 family. Part of the 50S ribosomal subunit. Forms a cluster with proteins L14 and L19. Methylated by PrmB.

Functionally, one of the primary rRNA binding proteins, it binds directly near the 3'-end of the 23S rRNA, where it nucleates assembly of the 50S subunit. The sequence is that of Large ribosomal subunit protein uL3 from Roseobacter denitrificans (strain ATCC 33942 / OCh 114) (Erythrobacter sp. (strain OCh 114)).